The following is a 344-amino-acid chain: Methionine aminopeptidase 1C, chloroplastic/mitochondrial (344 aa).

H172 serves as a coordination point for substrate. Residues D189, D200, and H262 each coordinate a divalent metal cation. H269 lines the substrate pocket. 2 residues coordinate a divalent metal cation: E296 and E327.

It belongs to the peptidase M24A family. Methionine aminopeptidase type 1 subfamily. Requires Co(2+) as cofactor. Zn(2+) is required as a cofactor. It depends on Mn(2+) as a cofactor. Fe(2+) serves as cofactor. In terms of tissue distribution, ubiquitous.

The protein resides in the plastid. It is found in the chloroplast. It localises to the mitochondrion. The catalysed reaction is Release of N-terminal amino acids, preferentially methionine, from peptides and arylamides.. Its function is as follows. Removes the N-terminal methionine from nascent proteins. The N-terminal methionine is often cleaved when the second residue in the primary sequence is small and uncharged (Met-Ala-, Cys, Gly, Pro, Ser, Thr, or Val). This chain is Methionine aminopeptidase 1C, chloroplastic/mitochondrial (MAP1C), found in Arabidopsis thaliana (Mouse-ear cress).